Reading from the N-terminus, the 254-residue chain is Probable transcriptional regulatory protein Cyan7425_4347 (254 aa).

Belongs to the TACO1 family.

It localises to the cytoplasm. In Cyanothece sp. (strain PCC 7425 / ATCC 29141), this protein is Probable transcriptional regulatory protein Cyan7425_4347.